Here is a 517-residue protein sequence, read N- to C-terminus: Ribonuclease Y (517 aa).

Residues 1 to 21 (MIESLIALIAAIVGLGIGYLV) form a helical membrane-spanning segment. A KH domain is found at 207-273 (LINVINIKND…TKVIELLVED (67 aa)). The 94-residue stretch at 333 to 426 (ALAHSLEVAH…VCAADTLSAA (94 aa)) folds into the HD domain.

Belongs to the RNase Y family.

It localises to the cell membrane. Functionally, endoribonuclease that initiates mRNA decay. This Campylobacter jejuni subsp. jejuni serotype O:6 (strain 81116 / NCTC 11828) protein is Ribonuclease Y.